The primary structure comprises 62 residues: uncharacterized protein (62 aa).

This is an uncharacterized protein from Escherichia coli O157:H7.